Consider the following 509-residue polypeptide: Maturase K (509 aa).

It belongs to the intron maturase 2 family. MatK subfamily.

Its subcellular location is the plastid. The protein resides in the chloroplast. Its function is as follows. Usually encoded in the trnK tRNA gene intron. Probably assists in splicing its own and other chloroplast group II introns. This Sequoia sempervirens (California redwood) protein is Maturase K.